The chain runs to 233 residues: Ribonuclease 3 (233 aa).

Residues 4–126 (LNKLMERLGH…IVGAIYIDAG (123 aa)) form the RNase III domain. Glu-39 contributes to the Mg(2+) binding site. The active site involves Asp-43. Residues Asp-112 and Glu-115 each contribute to the Mg(2+) site. The active site involves Glu-115. The DRBM domain maps to 153 to 222 (DAKSLLQEWL…AKRFLELLDD (70 aa)).

This sequence belongs to the ribonuclease III family. Homodimer. The cofactor is Mg(2+).

It is found in the cytoplasm. The enzyme catalyses Endonucleolytic cleavage to 5'-phosphomonoester.. Functionally, digests double-stranded RNA. Involved in the processing of primary rRNA transcript to yield the immediate precursors to the large and small rRNAs (23S and 16S). Processes some mRNAs, and tRNAs when they are encoded in the rRNA operon. Processes pre-crRNA and tracrRNA of type II CRISPR loci if present in the organism. This chain is Ribonuclease 3, found in Coxiella burnetii (strain Dugway 5J108-111).